A 241-amino-acid polypeptide reads, in one-letter code: tRNA (guanine-N(7)-)-methyltransferase (241 aa).

Residues 1 to 10 (MTESNETPNT) are compositionally biased toward polar residues. Residues 1–21 (MTESNETPNTPEAGDESKHRR) are disordered. Positions 71, 96, 123, and 146 each coordinate S-adenosyl-L-methionine. Residue Asp-146 is part of the active site. Substrate is bound by residues Lys-150, Asp-182, and 219–222 (TKFE).

This sequence belongs to the class I-like SAM-binding methyltransferase superfamily. TrmB family.

It carries out the reaction guanosine(46) in tRNA + S-adenosyl-L-methionine = N(7)-methylguanosine(46) in tRNA + S-adenosyl-L-homocysteine. It functions in the pathway tRNA modification; N(7)-methylguanine-tRNA biosynthesis. Catalyzes the formation of N(7)-methylguanine at position 46 (m7G46) in tRNA. The sequence is that of tRNA (guanine-N(7)-)-methyltransferase from Pseudomonas fluorescens (strain SBW25).